Here is a 291-residue protein sequence, read N- to C-terminus: UPF0276 protein VV3194 (291 aa).

It belongs to the UPF0276 family.

The chain is UPF0276 protein VV3194 from Vibrio vulnificus (strain YJ016).